The primary structure comprises 546 residues: Membrane protein insertase YidC (546 aa).

Residues 6–26 (NLLLIALLFVSFMIWQAWQVD) form a helical membrane-spanning segment. The segment covering 30-44 (QPTAQTTQQTTNTAT) has biased composition (low complexity). Residues 30–55 (QPTAQTTQQTTNTATGDKASQAVPGS) are disordered. 4 consecutive transmembrane segments (helical) span residues 344–364 (KFIHSFVGNWGFSIIVITFIV), 419–439 (LGGCLPLIIQMPIFLALYYML), 457–477 (LSAQDPYYILPILMGITMYFI), and 498–518 (PVIFTVFFLWFPAGLVLYYIV).

This sequence belongs to the OXA1/ALB3/YidC family. Type 1 subfamily. Interacts with the Sec translocase complex via SecD. Specifically interacts with transmembrane segments of nascent integral membrane proteins during membrane integration.

It localises to the cell inner membrane. Required for the insertion and/or proper folding and/or complex formation of integral membrane proteins into the membrane. Involved in integration of membrane proteins that insert both dependently and independently of the Sec translocase complex, as well as at least some lipoproteins. Aids folding of multispanning membrane proteins. The sequence is that of Membrane protein insertase YidC from Yersinia pestis.